The primary structure comprises 579 residues: Arginine--tRNA ligase (579 aa).

A 'HIGH' region motif is present at residues 123–133 (PNLAKEMHVGH).

The protein belongs to the class-I aminoacyl-tRNA synthetase family. In terms of assembly, monomer.

The protein resides in the cytoplasm. It catalyses the reaction tRNA(Arg) + L-arginine + ATP = L-arginyl-tRNA(Arg) + AMP + diphosphate. This is Arginine--tRNA ligase from Saccharophagus degradans (strain 2-40 / ATCC 43961 / DSM 17024).